Reading from the N-terminus, the 574-residue chain is Bifunctional NADP phosphatase/NAD kinase (574 aa).

The tract at residues 1 to 297 (MVIMEGFKIA…KLIALFGNRW (297 aa)) is NADP phosphatase. 5 residues coordinate Mg(2+): E69, D87, I89, D90, and D243. Residues 302–574 (VKFGIVVRED…NKLSRCLGIK (273 aa)) form an NAD kinase region. The active-site Proton acceptor is the D362. NAD(+) is bound by residues 362-363 (DG), R367, 436-437 (NE), K447, R464, D466, and 477-482 (TAYSLS).

This sequence in the N-terminal section; belongs to the inositol monophosphatase superfamily. In the C-terminal section; belongs to the NAD kinase family. As to quaternary structure, homotetramer. It depends on Mg(2+) as a cofactor.

The protein resides in the cytoplasm. It catalyses the reaction NAD(+) + ATP = ADP + NADP(+) + H(+). It carries out the reaction NADP(+) + H2O = phosphate + NAD(+). The enzyme catalyses UTP + NAD(+) = UDP + NADP(+) + H(+). The catalysed reaction is 5-methyl-UTP + NAD(+) = 5-methyl-UDP + NADP(+) + H(+). It catalyses the reaction CTP + NAD(+) = CDP + NADP(+) + H(+). It carries out the reaction GTP + NAD(+) = GDP + NADP(+) + H(+). The enzyme catalyses dATP + NAD(+) = dADP + NADP(+) + H(+). The catalysed reaction is NADPH + H2O = phosphate + NADH. It catalyses the reaction adenosine 2'-phosphate + H2O = adenosine + phosphate. It carries out the reaction beta-D-fructose 1,6-bisphosphate + H2O = beta-D-fructose 6-phosphate + phosphate. Phosphatase activity is slightly inhibited by ADP, NADH and ATP, and moderately inhibited by NAD and 5'-AMP. Kinase activity is slightly inhibited by ADP and NADP. Involved in the regulation of the intracellular balance between NAD(H) and NADP(H), and is a key enzyme in the biosynthesis of NADP. Catalyzes the phosphorylation and dephosphorylation of NAD and NADP, respectively. Although it shows conflicting dual activities and is able to supply NADP, it seems that its physiological role is to prevent excess accumulation of NADP. Kinase can use ATP and other nucleoside triphosphates (UTP, TTP, CTP, GTP) as well as inorganic polyphosphate (poly(P)) as phosphoryl donors, however poly(P) is not considered to be the physiological phosphoryl donor. NAD is the preferred substrate for the kinase, but NADH can also be used as phosphoryl acceptor. Phosphatase can use NADP or NADPH as phosphoryl donor, but NADP is the preferred substrate. Phosphatase also has an activity toward the terminal phosphate group at C-2 of adenosine in 2'-AMP and toward the phosphate group at C-1 of fructose 1,6-bisphosphate, but not toward inositol 1-phosphate. This Methanocaldococcus jannaschii (strain ATCC 43067 / DSM 2661 / JAL-1 / JCM 10045 / NBRC 100440) (Methanococcus jannaschii) protein is Bifunctional NADP phosphatase/NAD kinase.